We begin with the raw amino-acid sequence, 94 residues long: Large ribosomal subunit protein bL25 (94 aa).

Belongs to the bacterial ribosomal protein bL25 family. Part of the 50S ribosomal subunit; part of the 5S rRNA/L5/L18/L25 subcomplex. Contacts the 5S rRNA. Binds to the 5S rRNA independently of L5 and L18.

Functionally, this is one of the proteins that binds to the 5S RNA in the ribosome where it forms part of the central protuberance. In Photorhabdus laumondii subsp. laumondii (strain DSM 15139 / CIP 105565 / TT01) (Photorhabdus luminescens subsp. laumondii), this protein is Large ribosomal subunit protein bL25.